A 240-amino-acid chain; its full sequence is Bidirectional sugar transporter SWEET5 (240 aa).

At 1 to 9 (MTDPHTART) the chain is on the extracellular side. A helical membrane pass occupies residues 10–30 (IVGIVGNVISFGLFCAPIPTM). Positions 10 to 95 (IVGIVGNVIS…YVTIFFVFAT (86 aa)) constitute a MtN3/slv 1 domain. Over 31–45 (VKIWKMKSVSEFKPD) the chain is Cytoplasmic. A helical transmembrane segment spans residues 46-66 (PYVATVLNCMMWTFYGLPFVQ). Topologically, residues 67–72 (PDSLLV) are extracellular. Residues 73 to 93 (ITINGTGLFMELVYVTIFFVF) traverse the membrane as a helical segment. Over 94-103 (ATSPVRRKIT) the chain is Cytoplasmic. The chain crosses the membrane as a helical span at residues 104–124 (IAMVIEVIFMAVVIFCTMYFL). Residues 125-131 (HTTKQRS) lie on the Extracellular side of the membrane. The helical transmembrane segment at 132–152 (MLIGILCIVFNVIMYAAPLTV) threads the bilayer. Positions 133-217 (LIGILCIVFN…IIYITYYKTT (85 aa)) constitute a MtN3/slv 2 domain. Over 153–165 (MKLVIKTKSVKYM) the chain is Cytoplasmic. A helical membrane pass occupies residues 166 to 186 (PFFLSLANFMNGVVWVIYACL). The Extracellular segment spans residues 187–190 (KFDP). Residues 191–211 (YILIPNGLGSLSGIIQLIIYI) form a helical membrane-spanning segment. The Cytoplasmic portion of the chain corresponds to 212–240 (TYYKTTNWNDDDEDKEKRYSNAGIELGQA).

This sequence belongs to the SWEET sugar transporter family. As to quaternary structure, forms homooligomers and heterooligomers with SWEET6, SWEET8, SWEET9, SWEET11 and SWEET12.

Its subcellular location is the cell membrane. In terms of biological role, mediates both low-affinity uptake and efflux of sugar across the plasma membrane. May play roles in nurturing the male gametophyte. This chain is Bidirectional sugar transporter SWEET5, found in Arabidopsis thaliana (Mouse-ear cress).